Reading from the N-terminus, the 1157-residue chain is MKAGHLLWALLLMHSLWSIPTDGAIRNYYLGIQDMQWNYAPKGRNVITNQTLNNDTVASSFLKSGKNRIGSSYKKTVYKEYSDGTYTEEIAKPAWLGFLGPLLQAEVGDVILIHLKNFASRPYTIHPHGVFYEKDSEGSLYPDGSSGYLKADDSVPPGGSHVYNWSIPESHAPTEADPACLTWIYHSHVDAPRDIATGLIGPLITCKRGTLDGNSPPQRKDVDHNFFLLFSVIDENLSWHLDDNIATYCSDPASVDKEDGAFQDSNRMHAINGFVFGNLPELSMCAQKHVAWHLFGMGNEIDVHTAFFHGQMLSIRGHHTDVANIFPATFVTAEMVPQKSGTWLISCEVNSHLRSGMQAFYKVDSCSMDPPVDQLTGKVRQYFIQAHEIQWDYGPIGYDGRTGKSLREPGSGPDKYFQKSSSRIGGTYWKVRYEAFQDETFQERVHQEEETHLGILGPVIRAEVGDTIQVVFYNRASQPFSIQPHGVFYEKNSEGTVYNDGTSHPKVAKSFEKVTYYWTVPPHAGPTAQDPACLTWMYFSAADPTRDTNSGLVGPLLVCKAGALGADGKQKGVDKEFFLLFTVFDENESWYNNANQAAGMLDSRLLSEDVEGFQDSNRMHAINGFLFSNLPRLDMCKGDTVAWHLLGLGTETDVHGVMFEGNTVQLQGMRKGAVMLFPHTFVTAIMQPDNPGIFEIYCQAGSHREEGMQAIYNVSQCSSHQDSPRQHYQASRVYYIMAEEIEWDYCPDRSWELEWHNTSEKDSYGHVFLSNKDGLLGSKYKKAVFREYTDGTFRIPRPRSGPEEHLGILGPLIRGEVGDILTVVFKNKASRPYSIHAHGVLESNTGGPQAAEPGEVLTYQWNIPERSGPGPSDSACVSWIYYSAVDPIKDMYSGLVGPLVICRNGILEPNGGRNDMDREFALLFLIFDENQSWYLKENIATYGPQESSHVNLKDATFLESNKMHAINGKLYANLRGLTVYQGERVAWYMLAMGQDTDIHTVHFHAESFLYQNGQSYRADVVDLFPGTFEVVEMVASNPGTWLMHCHVTDHVHAGMETIFTVLSHEEHFSTMTTITKEIGKAVILRDIGGDNVKMLGMNIPIKDVEILSSALIAICVLLLLIALALGGVVWYQHRQRKLRRNRRSILDDSFKLLSLKQ.

An N-terminal signal peptide occupies residues 1–18 (MKAGHLLWALLLMHSLWS). The Extracellular portion of the chain corresponds to 19–1109 (IPTDGAIRNY…PIKDVEILSS (1091 aa)). 6 consecutive Plastocyanin-like domains span residues 24–206 (AIRN…LITC), 218–366 (QRKD…VDSC), 370–559 (PPVD…LLVC), 569–717 (KQKG…VSQC), 730–902 (ASRV…LVIC), and 910–1066 (NGGR…SHEE). N-linked (GlcNAc...) asparagine glycosylation is found at Asn-49 and Asn-54. Na(+) contacts are provided by Gly-70 and Tyr-73. His-126 and His-128 together coordinate Cu(2+). Position 126 (His-126) interacts with O2. The Ca(2+) site is built by Lys-134, Asp-152, and Asp-153. Asn-164 is a glycosylation site (N-linked (GlcNAc...) asparagine). Cys-180 and Cys-206 are joined by a disulfide. Positions 186 and 188 each coordinate Cu(2+). An O2-binding site is contributed by His-186. Asn-236 carries an N-linked (GlcNAc...) asparagine glycan. Residue Ser-265 participates in Na(+) binding. An intrachain disulfide couples Cys-285 to Cys-366. Cu(2+)-binding residues include His-304, Cys-347, and His-352. 3 residues coordinate Na(+): Tyr-416, Gly-425, and Tyr-428. Cys-533 and Cys-559 are oxidised to a cystine. N-linked (GlcNAc...) asparagine glycosylation is present at Asn-587. Residue Ser-616 coordinates Na(+). Cys-636 and Cys-717 form a disulfide bridge. Residues His-655, Cys-698, His-703, and Met-708 each contribute to the Cu(2+) site. 2 N-linked (GlcNAc...) asparagine glycosylation sites follow: Asn-713 and Asn-757. The Na(+) site is built by Phe-768 and Gly-777. A disulfide bridge connects residues Cys-876 and Cys-902. Residue Asn-930 is glycosylated (N-linked (GlcNAc...) asparagine). Residues His-999, His-1002, His-1004, His-1044, Cys-1045, His-1046, His-1050, and Met-1055 each coordinate Cu(2+). O2 is bound by residues His-1002 and His-1004. O2 is bound at residue His-1046. A helical transmembrane segment spans residues 1110 to 1130 (ALIAICVLLLLIALALGGVVW). The Cytoplasmic portion of the chain corresponds to 1131–1157 (YQHRQRKLRRNRRSILDDSFKLLSLKQ). 3 positions are modified to phosphoserine: Ser-1144, Ser-1149, and Ser-1154.

The protein belongs to the multicopper oxidase family. Part of a complex composed of SLC40A1/ferroportin, TF/transferrin and HEPH/hephaestin that transfers iron from cells to transferrin. Cu cation serves as cofactor.

Its subcellular location is the basolateral cell membrane. The enzyme catalyses 4 Fe(2+) + O2 + 4 H(+) = 4 Fe(3+) + 2 H2O. In terms of biological role, plasma membrane ferroxidase that mediates the extracellular conversion of ferrous/Fe(2+) iron into its ferric/Fe(3+) form. Couples ferroportin which specifically exports ferrous/Fe(2+) iron from cells to transferrin that only binds and shuttles extracellular ferric/Fe(3+) iron throughout the body. By helping iron transfer from cells to blood mainly contributes to dietary iron absorption by the intestinal epithelium and more generally regulates iron levels in the body. This chain is Hephaestin, found in Mus musculus (Mouse).